Consider the following 179-residue polypeptide: Large ribosomal subunit protein uL5 (179 aa).

It belongs to the universal ribosomal protein uL5 family. In terms of assembly, part of the 50S ribosomal subunit; part of the 5S rRNA/L5/L18/L25 subcomplex. Contacts the 5S rRNA and the P site tRNA. Forms a bridge to the 30S subunit in the 70S ribosome.

Functionally, this is one of the proteins that bind and probably mediate the attachment of the 5S RNA into the large ribosomal subunit, where it forms part of the central protuberance. In the 70S ribosome it contacts protein S13 of the 30S subunit (bridge B1b), connecting the 2 subunits; this bridge is implicated in subunit movement. Contacts the P site tRNA; the 5S rRNA and some of its associated proteins might help stabilize positioning of ribosome-bound tRNAs. The polypeptide is Large ribosomal subunit protein uL5 (Pectobacterium atrosepticum (strain SCRI 1043 / ATCC BAA-672) (Erwinia carotovora subsp. atroseptica)).